The sequence spans 438 residues: Cysteine--tRNA ligase (438 aa).

Zn(2+) is bound at residue C28. Positions P30–N40 match the 'HIGH' region motif. 3 residues coordinate Zn(2+): C207, H232, and E236. A 'KMSKS' region motif is present at residues K264–S268. K267 contributes to the ATP binding site.

This sequence belongs to the class-I aminoacyl-tRNA synthetase family. In terms of assembly, monomer. Zn(2+) is required as a cofactor.

The protein localises to the cytoplasm. It carries out the reaction tRNA(Cys) + L-cysteine + ATP = L-cysteinyl-tRNA(Cys) + AMP + diphosphate. The protein is Cysteine--tRNA ligase of Aster yellows witches'-broom phytoplasma (strain AYWB).